A 463-amino-acid polypeptide reads, in one-letter code: Asparagine--tRNA ligase (463 aa).

It belongs to the class-II aminoacyl-tRNA synthetase family. As to quaternary structure, homodimer.

The protein localises to the cytoplasm. The catalysed reaction is tRNA(Asn) + L-asparagine + ATP = L-asparaginyl-tRNA(Asn) + AMP + diphosphate + H(+). The polypeptide is Asparagine--tRNA ligase (Acholeplasma laidlawii (strain PG-8A)).